Reading from the N-terminus, the 658-residue chain is UvrABC system protein B (658 aa).

A Helicase ATP-binding domain is found at 26–414 (DGLRRGVKHQ…PGVVEQIIRP (389 aa)). 39–46 (GATGTGKT) contacts ATP. The Beta-hairpin signature appears at 92 to 115 (YYDYYQPEAYVPQTDTYIEKDAKI). Residues 430 to 596 (QIDDLIGEIR…TVKKEIRDVI (167 aa)) form the Helicase C-terminal domain. Residues 622-657 (EELIRTLEAEMKEAAKALDFERAAQLRDIIFELKAE) form the UVR domain.

It belongs to the UvrB family. In terms of assembly, forms a heterotetramer with UvrA during the search for lesions. Interacts with UvrC in an incision complex.

It is found in the cytoplasm. Functionally, the UvrABC repair system catalyzes the recognition and processing of DNA lesions. A damage recognition complex composed of 2 UvrA and 2 UvrB subunits scans DNA for abnormalities. Upon binding of the UvrA(2)B(2) complex to a putative damaged site, the DNA wraps around one UvrB monomer. DNA wrap is dependent on ATP binding by UvrB and probably causes local melting of the DNA helix, facilitating insertion of UvrB beta-hairpin between the DNA strands. Then UvrB probes one DNA strand for the presence of a lesion. If a lesion is found the UvrA subunits dissociate and the UvrB-DNA preincision complex is formed. This complex is subsequently bound by UvrC and the second UvrB is released. If no lesion is found, the DNA wraps around the other UvrB subunit that will check the other stand for damage. The protein is UvrABC system protein B of Geobacillus kaustophilus (strain HTA426).